The primary structure comprises 487 residues: METVQLRNPPRRQLKKLDEDSLTKQPEEVFDVLEKLGEGSYGSVYKAIHKETGQIVAIKQVPVESDLQEIIKEISIMQQCDSPHVVKYYGSYFKNTDLWIVMEYCGAGSVSDIIRLRNKTLTEDEIATILQSTLKGLEYLHFMRKIHRDIKAGNILLNTEGQAKLADFGVAGQLTDTMAKRNTVIGTPFWMAPEVIQEIGYNCVADIWSLGITAIEMAEGKPPYADIHPMRAIFMIPTNPPPTFRKPELWSDNFTDFVKQCLVKSPEQRATATQLLQHPFVKSAKGVSILRDLINEAMDVKLKRQESQQREVDQDDEENSEEDEMDSGTMVRAVGDEMGTVRVASTMTDGANTMIEHDDTLPSQLGTMVINTEDEEEEGTMKRRDETMQPAKPSFLEYFEQKEKENQINSFGKSVPGPLKNSSDWKIPQDGDYEFLKSWTVEDLQKRLLALDPMMEQEIEEIRQKYQSKRQPILDAIEAKKRRQQNF.

Met1 carries the post-translational modification N-acetylmethionine. Residue Thr3 is modified to Phosphothreonine. Residues 30–281 (FDVLEKLGEG…ATQLLQHPFV (252 aa)) form the Protein kinase domain. Residues 36-44 (LGEGSYGSV) and Lys59 each bind ATP. Catalysis depends on Asp149, which acts as the Proton acceptor. At Thr183 the chain carries Phosphothreonine; by autocatalysis. Ser265 is subject to Phosphoserine. Positions 290–310 (LRDLINEAMDVKLKRQESQQR) form a coiled coil. Basic and acidic residues predominate over residues 303-312 (KRQESQQREV). Residues 303–332 (KRQESQQREVDQDDEENSEEDEMDSGTMVR) are disordered. Residues 313–326 (DQDDEENSEEDEMD) are compositionally biased toward acidic residues. Phosphoserine is present on Ser320. 2 positions are modified to phosphothreonine: Thr340 and Thr367. Thr387 is modified (phosphothreonine; by PKB/AKT1). A phosphoserine mark is found at Ser410 and Ser414. Tyr433 carries the phosphotyrosine modification. The 48-residue stretch at 433 to 480 (YEFLKSWTVEDLQKRLLALDPMMEQEIEEIRQKYQSKRQPILDAIEAK) folds into the SARAH domain.

The protein belongs to the protein kinase superfamily. STE Ser/Thr protein kinase family. STE20 subfamily. As to quaternary structure, homodimer; mediated via the coiled-coil region. Interacts with NORE1, which inhibits autoactivation. Interacts with and stabilizes SAV1. Interacts with RASSF1. Interacts with FOXO3. Interacts with RASSF2 (via SARAH domain). Interacts with AR, PKB/AKT1, TNNI3 and SIRT1. Interacts with DLG5 (via PDZ domain 3). Interacts with MARK3 and SCRIB in the presence of DLG5. Mg(2+) is required as a cofactor. Autophosphorylated on serine and threonine residues. Phosphorylation at Thr-387 by PKB/AKT1, leads to inhibition of its: kinase activity, nuclear translocation and autophosphorylation at Thr-183. It also diminishes its cleavage by caspases and its ability to phosphorylate FOXO3. In terms of processing, proteolytically cleaved by caspase-3 during apoptosis at Asp-326 and Asp-349 resulting in a 37 kDa or a 39 kDa subunit respectively. The 39 kDa subunit is further cleaved into the 37 kDa form. Proteolytic cleavage results in kinase activation and nuclear translocation of the truncated form (MST1/N). It is less likely that cleavage at Asp-349 is a prerequisite for activation as this site is not conserved in the murine ortholog.

It is found in the cytoplasm. Its subcellular location is the nucleus. It catalyses the reaction L-seryl-[protein] + ATP = O-phospho-L-seryl-[protein] + ADP + H(+). The enzyme catalyses L-threonyl-[protein] + ATP = O-phospho-L-threonyl-[protein] + ADP + H(+). Its activity is regulated as follows. Inhibited by the C-terminal non-catalytic region. Activated by caspase-cleavage. Full activation also requires homodimerization and autophosphorylation of Thr-183. Activated by RASSF1 which acts by preventing its dephosphorylation. In terms of biological role, stress-activated, pro-apoptotic kinase which, following caspase-cleavage, enters the nucleus and induces chromatin condensation followed by internucleosomal DNA fragmentation. Key component of the Hippo signaling pathway which plays a pivotal role in organ size control and tumor suppression by restricting proliferation and promoting apoptosis. The core of this pathway is composed of a kinase cascade wherein STK3/MST2 and STK4/MST1, in complex with its regulatory protein SAV1, phosphorylates and activates LATS1/2 in complex with its regulatory protein MOB1, which in turn phosphorylates and inactivates YAP1 oncoprotein and WWTR1/TAZ. Phosphorylation of YAP1 by LATS2 inhibits its translocation into the nucleus to regulate cellular genes important for cell proliferation, cell death, and cell migration. STK3/MST2 and STK4/MST1 are required to repress proliferation of mature hepatocytes, to prevent activation of facultative adult liver stem cells (oval cells), and to inhibit tumor formation. Phosphorylates 'Ser-14' of histone H2B (H2BS14ph) during apoptosis. Phosphorylates FOXO3 upon oxidative stress, which results in its nuclear translocation and cell death initiation. Phosphorylates MOBKL1A, MOBKL1B and RASSF2. Phosphorylates TNNI3 (cardiac Tn-I) and alters its binding affinity to TNNC1 (cardiac Tn-C) and TNNT2 (cardiac Tn-T). Phosphorylates FOXO1 on 'Ser-212' and regulates its activation and stimulates transcription of PMAIP1 in a FOXO1-dependent manner. Phosphorylates SIRT1 and inhibits SIRT1-mediated p53/TP53 deacetylation, thereby promoting p53/TP53 dependent transcription and apoptosis upon DNA damage. Acts as an inhibitor of PKB/AKT1. Phosphorylates AR on 'Ser-650' and suppresses its activity by intersecting with PKB/AKT1 signaling and antagonizing formation of AR-chromatin complexes. This chain is Serine/threonine-protein kinase 4 (STK4), found in Papio anubis (Olive baboon).